The chain runs to 183 residues: Small ribosomal subunit protein eS10z (183 aa).

A disordered region spans residues leucine 91 to glutamate 183. Basic and acidic residues predominate over residues aspartate 109–tyrosine 130. 2 stretches are compositionally biased toward gly residues: residues arginine 131–glycine 146 and glycine 161–alanine 175.

The protein belongs to the eukaryotic ribosomal protein eS10 family.

The protein localises to the cytoplasm. The sequence is that of Small ribosomal subunit protein eS10z from Oryza sativa subsp. japonica (Rice).